A 309-amino-acid polypeptide reads, in one-letter code: Non-homologous end-joining factor 1 (309 aa).

The globular head stretch occupies residues 1–134 (MEAVLSALPW…TPVAVVCRQL (134 aa)). Residues 223–298 (GKTGRKRKHS…AGSEDRSTSR (76 aa)) are C-terminal tail. The segment at 223–309 (GKTGRKRKHS…KKKKAVGLFR (87 aa)) is disordered. A compositionally biased stretch (basic and acidic residues) spans 243-252 (HITDHQHISE). Polar residues-rich tracts occupy residues 253 to 265 (STDV…SQEH) and 273 to 290 (RSQV…STAG). Over residues 297–309 (SRAKKKKAVGLFR) the composition is skewed to basic residues. Positions 299 to 309 (AKKKKAVGLFR) match the XLM motif.

The protein belongs to the XRCC4-XLF family. XLF subfamily. As to quaternary structure, homodimer. Interacts with xrcc4; the interaction is direct and is mediated via a head-to-head interaction between N-terminal head regions. Component of the core long-range non-homologous end joining (NHEJ) complex (also named DNA-PK complex) composed of prkdc/DNA-PKcs, lig4, xrcc4, xrcc6/Ku70, xrcc5/Ku80 and nhej1/xlf.

Its subcellular location is the nucleus. The protein resides in the chromosome. Functionally, DNA repair protein involved in DNA non-homologous end joining (NHEJ); it is required for double-strand break (DSB) repair and V(D)J recombination and is also involved in telomere maintenance. Plays a key role in NHEJ by promoting the ligation of various mismatched and non-cohesive ends. In some studies, has been shown to associate with xrcc4 to form alternating helical filaments that bridge DNA and act like a bandage, holding together the broken DNA until it is repaired. Alternatively, it has also been shown that rather than forming filaments, a single nhej1 dimer interacts through both head domains with xrcc4 to promote the close alignment of DNA ends. The xrcc4-nhej1/xlf subcomplex binds to the DNA fragments of a DSB in a highly diffusive manner and robustly bridges two independent DNA molecules, holding the broken DNA fragments in close proximity to one other. The mobility of the bridges ensures that the ends remain accessible for further processing by other repair factors. The polypeptide is Non-homologous end-joining factor 1 (nhej1) (Danio rerio (Zebrafish)).